The primary structure comprises 335 residues: 3-hydroxyisobutyrate dehydrogenase, mitochondrial (335 aa).

The N-terminal 35 residues, 1 to 35, are a transit peptide targeting the mitochondrion; it reads MAASLGFRGAASGLRYWSGRRRPVGSLAAVCSRSM. 39 to 68 is a binding site for NAD(+); that stretch reads TPVGFIGLGNMGNPMAKNLIKHGYPLILYD. K59 and K75 each carry N6-acetyllysine; alternate. K59 and K75 each carry N6-succinyllysine; alternate. N6-succinyllysine is present on K94. Residues 102 to 103 and N107 contribute to the NAD(+) site; that span reads LP. Residue K120 is modified to N6-acetyllysine. T133 lines the NAD(+) pocket. K140 is subject to N6-succinyllysine. K144 is subject to N6-acetyllysine. At K148 the chain carries N6-acetyllysine; alternate. K148 carries the post-translational modification N6-succinyllysine; alternate. Residue K208 is part of the active site. N6-acetyllysine; alternate is present on residues K237 and K241. Residues K237 and K241 each carry the N6-succinyllysine; alternate modification. K283 is a binding site for NAD(+). K296 carries the post-translational modification N6-succinyllysine. N6-acetyllysine; alternate is present on K320. K320 carries the N6-succinyllysine; alternate modification.

Belongs to the HIBADH-related family. 3-hydroxyisobutyrate dehydrogenase subfamily. As to quaternary structure, homodimer. In terms of tissue distribution, higher level in kidney, liver, and heart than in muscle.

The protein localises to the mitochondrion. It catalyses the reaction 3-hydroxy-2-methylpropanoate + NAD(+) = 2-methyl-3-oxopropanoate + NADH + H(+). The protein operates within amino-acid degradation; L-valine degradation. The protein is 3-hydroxyisobutyrate dehydrogenase, mitochondrial (Hibadh) of Rattus norvegicus (Rat).